The primary structure comprises 127 residues: Mu-like prophage FluMu protein gp41 (127 aa).

A disordered region spans residues valine 107–serine 127. Residues glycine 110 to lysine 121 are compositionally biased toward basic and acidic residues.

To phage Mu protein gp41.

This Haemophilus influenzae (strain ATCC 51907 / DSM 11121 / KW20 / Rd) protein is Mu-like prophage FluMu protein gp41.